The primary structure comprises 450 residues: Tubulin alpha chain (450 aa).

Gln11 lines the GTP pocket. N6-acetyllysine is present on Lys40. The GTP site is built by Glu71, Ser140, Gly144, Thr145, Thr179, Asn206, and Asn228. Glu71 contributes to the Mg(2+) binding site. Glu254 is a catalytic residue.

Belongs to the tubulin family. In terms of assembly, dimer of alpha and beta chains. A typical microtubule is a hollow water-filled tube with an outer diameter of 25 nm and an inner diameter of 15 nM. Alpha-beta heterodimers associate head-to-tail to form protofilaments running lengthwise along the microtubule wall with the beta-tubulin subunit facing the microtubule plus end conferring a structural polarity. Microtubules usually have 13 protofilaments but different protofilament numbers can be found in some organisms and specialized cells. Mg(2+) is required as a cofactor. Post-translationally, acetylation of alpha chains at Lys-40 stabilizes microtubules and affects affinity and processivity of microtubule motors. This modification has a role in multiple cellular functions, ranging from cell motility, cell cycle progression or cell differentiation to intracellular trafficking and signaling.

The protein resides in the cytoplasm. Its subcellular location is the cytoskeleton. The enzyme catalyses GTP + H2O = GDP + phosphate + H(+). Its function is as follows. Tubulin is the major constituent of microtubules, a cylinder consisting of laterally associated linear protofilaments composed of alpha- and beta-tubulin heterodimers. Microtubules grow by the addition of GTP-tubulin dimers to the microtubule end, where a stabilizing cap forms. Below the cap, tubulin dimers are in GDP-bound state, owing to GTPase activity of alpha-tubulin. This Tyrophagus putrescentiae (Mold mite) protein is Tubulin alpha chain.